The following is a 276-amino-acid chain: Type II pantothenate kinase (276 aa).

8 to 15 provides a ligand contact to ATP; sequence DAGGTLTK. Residue E76 is the Proton acceptor of the active site. ATP contacts are provided by residues T105, 127–131, F143, and S230; that span reads GGTIM.

This sequence belongs to the type II pantothenate kinase family. As to quaternary structure, homodimer.

It localises to the cytoplasm. The enzyme catalyses (R)-pantothenate + ATP = (R)-4'-phosphopantothenate + ADP + H(+). It functions in the pathway cofactor biosynthesis; coenzyme A biosynthesis; CoA from (R)-pantothenate: step 1/5. Its function is as follows. Catalyzes the phosphorylation of pantothenate (Pan), the first step in CoA biosynthesis. In Bacillus cereus (strain ATCC 10987 / NRS 248), this protein is Type II pantothenate kinase.